The primary structure comprises 554 residues: (E)-beta-caryophyllene synthase (554 aa).

Mn(2+)-binding residues include aspartate 313 and aspartate 317. Residues 313-317 (DDIYD) carry the DDXXD motif motif. Homodimerization regions lie at residues 319–325 (YGTLDEL) and 391–427 (EAQW…LAVI). Mn(2+) contacts are provided by aspartate 457 and glutamate 465.

The protein belongs to the terpene synthase family. In terms of assembly, homodimer. Mn(2+) is required as a cofactor. It depends on Mg(2+) as a cofactor. Expressed in peltate glandular trichomes. Present at low levels in flowers, leaves and stems.

It carries out the reaction (2E,6E)-farnesyl diphosphate = (-)-(E)-beta-caryophyllene + diphosphate. The catalysed reaction is (2E,6E)-farnesyl diphosphate = alpha-humulene + diphosphate. It participates in secondary metabolite biosynthesis; terpenoid biosynthesis. Its function is as follows. Involved in the biosynthesis of phenolic sesquiterpenes natural products. Sesquiterpene synthase converting (2E,6E)-farnesyl diphosphate (FPP) to (E)-beta-caryophyllene and alpha-humulene. This chain is (E)-beta-caryophyllene synthase, found in Origanum vulgare (Wild marjoram).